Consider the following 403-residue polypeptide: MGVTETSTYRDLHLPSLIIGGSFATVAICLSLYSILQHLRFYTNPAEQKWIVSVLFMVPVYATESIISLSNSKFSLPCDILRNCYEAFALYSFGSYLVACLGGERRVVEYLENESKKPLLEEGANESKKKKKKNSFWKFLCDPYVLGRELFVIEKFGLVQYMILKTFCAFLTFLLELLGVYGDGEFKWYYGYPYIVVVLNFSQMWALFCLVQFYNVTHERLKEIKPLAKFISFKAIVFATWWQGFGIALLCYYGILPKEGRFQNGLQDFLICIEMAIAAVAHLFVFPAEPYHYIPVSECGKITAETSKTEVKLEEGGLVETTETQVEASGTSIKESVQDIVIDGGQHVVKDVVLTINQAIGPVEKGVTKIQDTIHQKLLDSDGKEETEVTEEVTVETSVPPKE.

Helical transmembrane passes span Ser16 to Leu36, Trp50 to Ser70, Met162 to Gly182, Gly191 to Val211, Ile236 to Leu256, and Phe269 to Glu289. The tract at residues Ser381 to Glu403 is disordered.

It belongs to the TMEM184 family.

It localises to the membrane. This chain is Protein LAZ1 homolog 2, found in Arabidopsis thaliana (Mouse-ear cress).